Reading from the N-terminus, the 230-residue chain is Somatolactin (230 aa).

A signal peptide spans 1 to 25 (MHTKVLQQGLWALLLWPHLFTVSVP). Intrachain disulfides connect cysteine 28–cysteine 38, cysteine 88–cysteine 204, and cysteine 221–cysteine 229. N-linked (GlcNAc...) asparagine glycosylation is present at asparagine 144.

The protein belongs to the somatotropin/prolactin family.

The protein localises to the secreted. Selectively regulates proliferation and morphogenesis of neural-crest derived pigment cells. The protein is Somatolactin of Oryzias latipes (Japanese rice fish).